The following is a 118-amino-acid chain: Large ribosomal subunit protein bL20 (118 aa).

This sequence belongs to the bacterial ribosomal protein bL20 family.

Its function is as follows. Binds directly to 23S ribosomal RNA and is necessary for the in vitro assembly process of the 50S ribosomal subunit. It is not involved in the protein synthesizing functions of that subunit. The protein is Large ribosomal subunit protein bL20 of Lactobacillus johnsonii (strain CNCM I-12250 / La1 / NCC 533).